Reading from the N-terminus, the 1518-residue chain is Putative cellulose synthase 2 (1518 aa).

The segment at 1–731 (MYGTWFTTGK…EEKLEKQSFV (731 aa)) is catalytic. Transmembrane regions (helical) follow at residues 24 to 44 (PVWVPVVLGVVLMAFVGSVRI), 71 to 91 (ITVFLMMLSLLVSLRYIVWRL), and 105 to 125 (LAVLLLLAEAYALMTLCLSYF). The catalytic subdomain A stretch occupies residues 144-237 (QWPSVDVFVP…FAVIFDCDHV (94 aa)). Residue aspartate 186 is part of the active site. Residues aspartate 233 and aspartate 235 each coordinate substrate. Positions 314 to 374 (EAVMGIGGFA…GQRVRWARGM (61 aa)) are catalytic subdomain B. Residue aspartate 330 is part of the active site. 5 helical membrane-spanning segments follow: residues 404–424 (FLFAIPRLTFLVSPLAFLFLG), 427–447 (IIAASPLAISVYALPHIFHSV), 465–485 (IYETSLALFLVRITIVTLLQP), 514–534 (ILAGVLCAALLRGVFGIVWQF), and 543–563 (FILNTLWVVISLIIVLASIAV). Residues 569 to 668 (QTRNAPRVSV…ERQVVSMVFG (100 aa)) form the PilZ domain. Residues 732-1518 (LKPVPRSARH…IARDDLTGEL (787 aa)) form a cyclic di-GMP binding domain region. The tract at residues 765–785 (APSPDQSGVTAETPFGDSNTG) is disordered. Residues 768 to 785 (PDQSGVTAETPFGDSNTG) show a composition bias toward polar residues. Residues 1481–1501 (ALYLAGLAGAGLAALGVWAWL) form a helical membrane-spanning segment.

The protein in the N-terminal section; belongs to the glycosyltransferase 2 family. In the C-terminal section; belongs to the AcsB/BcsB family.

It is found in the cell inner membrane. It carries out the reaction [(1-&gt;4)-beta-D-glucosyl](n) + UDP-alpha-D-glucose = [(1-&gt;4)-beta-D-glucosyl](n+1) + UDP + H(+). It functions in the pathway glycan metabolism; bacterial cellulose biosynthesis. This chain is Putative cellulose synthase 2 (bcsABII-A), found in Komagataeibacter xylinus (Gluconacetobacter xylinus).